A 557-amino-acid chain; its full sequence is Urocanate hydratase (557 aa).

Residues 53 to 54, Q131, 177 to 179, E197, R202, 243 to 244, 264 to 268, 274 to 275, and Y323 contribute to the NAD(+) site; these read GG, GMG, NA, QTSAH, and YL. Residue C411 is part of the active site. G493 serves as a coordination point for NAD(+).

This sequence belongs to the urocanase family. NAD(+) serves as cofactor.

It localises to the cytoplasm. It carries out the reaction 4-imidazolone-5-propanoate = trans-urocanate + H2O. Its pathway is amino-acid degradation; L-histidine degradation into L-glutamate; N-formimidoyl-L-glutamate from L-histidine: step 2/3. Functionally, catalyzes the conversion of urocanate to 4-imidazolone-5-propionate. This chain is Urocanate hydratase, found in Pseudomonas entomophila (strain L48).